A 657-amino-acid chain; its full sequence is Probable intron-encoded endonuclease aI2 (657 aa).

The segment at Met1–Gly245 is COX1 exons 1 to 2 encoded. Helical transmembrane passes span Ile19–Val39, Leu69–Leu89, Leu103–Leu123, Ala152–Val172, Pro188–Leu208, and Met269–Val289. The segment at Gln246–Phe657 is COX1 intron 2 encoded.

The protein in the C-terminal section; belongs to the LAGLIDADG endonuclease family. In the N-terminal section; belongs to the heme-copper respiratory oxidase family. In terms of processing, the mature protein may arise from proteolytic cleavage of an in-frame translation of COX1 exons 1 and 2 plus intron 2, containing the aI2 open reading frame.

It is found in the mitochondrion. The protein localises to the membrane. Functionally, mitochondrial DNA endonuclease involved in intron homing. This is Probable intron-encoded endonuclease aI2 (aI2) from Debaryomyces hansenii (strain ATCC 36239 / CBS 767 / BCRC 21394 / JCM 1990 / NBRC 0083 / IGC 2968) (Yeast).